Reading from the N-terminus, the 610-residue chain is Dopamine beta-hydroxylase (610 aa).

Topologically, residues 1-9 (MKVPSPSVR) are cytoplasmic. A helical; Signal-anchor for type II membrane protein membrane pass occupies residues 10-30 (EAASMYGTAVAIFLVILVAAL). Residues 31–610 (QGSEPPESPF…TVVDIGGGKG (580 aa)) lie on the Intragranular side of the membrane. Positions 50–166 (GTLELSWNVS…GTVHLVYGIL (117 aa)) constitute a DOMON domain. N-linked (GlcNAc...) asparagine glycosylation is found at asparagine 57, asparagine 177, and asparagine 194. Cystine bridges form between cysteine 147/cysteine 589, cysteine 225/cysteine 276, cysteine 262/cysteine 288, cysteine 383/cysteine 496, cysteine 387/cysteine 558, and cysteine 459/cysteine 481. The active site involves tyrosine 223. Cu(2+) contacts are provided by histidine 255 and histidine 256. Residues histidine 326, histidine 405, histidine 407, and methionine 480 each contribute to the Cu(2+) site. Residue histidine 405 is part of the active site. A disordered region spans residues 586-610 (TPRCPASRGRSPAGPTVVDIGGGKG).

This sequence belongs to the copper type II ascorbate-dependent monooxygenase family. Homotetramer; composed of two disulfide-linked dimers. Cu(2+) is required as a cofactor. Proteolytic cleavage after the membrane-anchor leads to the release of the soluble form. In terms of processing, N-glycosylated. In terms of tissue distribution, detected in adrenal medulla chromaffin cells.

The protein localises to the cytoplasmic vesicle. Its subcellular location is the secretory vesicle lumen. It localises to the secretory vesicle. The protein resides in the chromaffin granule lumen. It is found in the secreted. The protein localises to the secretory vesicle membrane. Its subcellular location is the chromaffin granule membrane. It catalyses the reaction dopamine + 2 L-ascorbate + O2 = (R)-noradrenaline + 2 monodehydro-L-ascorbate radical + H2O. It functions in the pathway catecholamine biosynthesis; (R)-noradrenaline biosynthesis; (R)-noradrenaline from dopamine: step 1/1. Its function is as follows. Catalyzes the hydroxylation of dopamine to noradrenaline (also known as norepinephrine), and is thus vital for regulation of these neurotransmitters. The polypeptide is Dopamine beta-hydroxylase (DBH) (Equus caballus (Horse)).